The sequence spans 497 residues: Serine hydroxymethyltransferase (497 aa).

(6S)-5,6,7,8-tetrahydrofolate is bound by residues leucine 176 and 180-182 (GHL). Position 289 is an N6-(pyridoxal phosphate)lysine (lysine 289).

Belongs to the SHMT family. In terms of assembly, homodimer. Pyridoxal 5'-phosphate serves as cofactor.

It localises to the cytoplasm. The enzyme catalyses (6R)-5,10-methylene-5,6,7,8-tetrahydrofolate + glycine + H2O = (6S)-5,6,7,8-tetrahydrofolate + L-serine. It functions in the pathway one-carbon metabolism; tetrahydrofolate interconversion. Its pathway is amino-acid biosynthesis; glycine biosynthesis; glycine from L-serine: step 1/1. Functionally, catalyzes the reversible interconversion of serine and glycine with tetrahydrofolate (THF) serving as the one-carbon carrier. This reaction serves as the major source of one-carbon groups required for the biosynthesis of purines, thymidylate, methionine, and other important biomolecules. Also exhibits THF-independent aldolase activity toward beta-hydroxyamino acids, producing glycine and aldehydes, via a retro-aldol mechanism. The protein is Serine hydroxymethyltransferase of Chlamydia muridarum (strain MoPn / Nigg).